The sequence spans 80 residues: Lantibiotic Flvalpha.c (80 aa).

Positions 1–38 (MNKNPIYRSEEEAKNIACGNVAAELDENSQALDAINGA) are cleaved as a propeptide — cleaved by FlvT. 2,3-didehydrobutyrine; by FlvM1 occurs at positions 43 and 47. The beta-methyllanthionine (Thr-Cys); by FlvM1 cross-link spans 52–55 (TLGC). The segment at residues 58 to 68 (SYGLGNGGYCC) is a cross-link (lanthionine (Ser-Cys); by FlvM1). 2 consecutive cross-links (beta-methyllanthionine (Thr-Cys); by FlvM1) follow at residues 69-74 (TYTVEC) and 71-78 (TVECSKTC).

In terms of processing, the lanthionine formed by Ser-58 and Cys-68 forms a putative lipid II binding motif. Maturation of FlvA1 peptides involves the enzymatic conversion of Thr, and Ser into dehydrated AA and the formation of thioether bonds with cysteines. Modifications are processed by the flavecin synthetase FlvM1. This is followed by membrane translocation and cleavage of the modified precursor. Post-translationally, contains DL-lanthionine and DL-beta-methyllanthionine, when coepressed in E.coli with the flavecin synthetase FlvM1.

Its subcellular location is the secreted. Lanthionine-containing peptide antibiotic (lantibiotic) only active on Gram-positive bacteria in synergy with Flvbeta peptides, which are encoded by the same operon than Flvalpha.a. Shows antibacterial activity in synergy with Flvbeta.b, Flvbeta.c, Flvbeta.e and Flvbeta.g. Does not show antibacterial activity when tested with Flvbeta.a, Flvbeta.d, Flvbeta.f and Flvbeta.h. The bactericidal activity of lantibiotics is based on depolarization of energized bacterial cytoplasmic membranes, initiated by the formation of aqueous transmembrane pores. The polypeptide is Lantibiotic Flvalpha.c (Ruminococcus flavefaciens).